The primary structure comprises 391 residues: Glycerophosphocholine acyltransferase 1 (391 aa).

Residues 1–66 lie on the Cytoplasmic side of the membrane; sequence MSNNEDPINE…IAKQAEEHES (66 aa). Residues 67–87 traverse the membrane as a helical segment; the sequence is FINKVTHLLGVLGFGGFCFLL. Residues 88–92 are Lumenal-facing; the sequence is GARPQ. The helical transmembrane segment at 93 to 113 threads the bilayer; it reads DIPYVYCLFFFIFVPLRWIYY. Over 114 to 119 the chain is Cytoplasmic; it reads RFKKWH. Residues 120–140 form a helical membrane-spanning segment; sequence YFLLDFCYYANTIFLVDLLLY. Residues 141–144 are Lumenal-facing; sequence PKDE. The helical transmembrane segment at 145-165 threads the bilayer; sequence KLFMVCFSFAEGPLAWALIVW. Over 166 to 172 the chain is Cytoplasmic; it reads RCSLVFS. A helical membrane pass occupies residues 173 to 193; sequence SVDKIVSVLIHLLPGLVFFTI. The Lumenal segment spans residues 194–226; the sequence is RWWNPATFEAMHPEGTSGRASWPYVEDKSFLFT. A helical transmembrane segment spans residues 227–247; it reads WLFLVPLVAYFLWQLLYFLIV. Topologically, residues 248-294 are cytoplasmic; sequence NVLRRQRLLRDPEVMTSYRELSKKAQKANNVWWRLSGLLGDQNRMLM. The helical transmembrane segment at 295-315 threads the bilayer; sequence YILLQALFTVATTALTVPIFL. The Lumenal segment spans residues 316–318; that stretch reads SYE. A helical membrane pass occupies residues 319-339; that stretch reads LHAVFQILKVSAAVWNGGSFL. At 340-391 the chain is on the cytoplasmic side; the sequence is LDVMPRQVILKEKKKSELQPAHIQQYHSEPKQDQSPNSMEIRMKTIHSAEEQ. The segment at 354–391 is disordered; the sequence is KSELQPAHIQQYHSEPKQDQSPNSMEIRMKTIHSAEEQ. Positions 380 to 391 are enriched in basic and acidic residues; the sequence is IRMKTIHSAEEQ.

Belongs to the GPC1 family.

The protein localises to the membrane. The enzyme catalyses sn-glycerol 3-phosphocholine + an acyl-CoA = a monoacyl-sn-glycero-3-phosphocholine + CoA. It carries out the reaction sn-glycero-3-phosphoethanolamine + an acyl-CoA = a monoacyl-sn-glycero-3-phosphoethanolamine + CoA. It catalyses the reaction sn-glycerol 3-phosphocholine + hexadecanoyl-CoA = hexadecanoyl-sn-glycero-3-phosphocholine + CoA. The catalysed reaction is (9Z)-hexadecenoyl-CoA + sn-glycerol 3-phosphocholine = (9Z-hexadecenoyl)-sn-glycero-3-phosphocholine + CoA. The enzyme catalyses (9Z,12Z)-octadecadienoyl-CoA + sn-glycerol 3-phosphocholine = (9Z,12Z-octadecadienoyl)-sn-glycero-3-phosphocholine + CoA. It carries out the reaction (12R)-hydroxy-(9Z)-octadecenoyl-CoA + sn-glycerol 3-phosphocholine = (12R-hydroxy-9Z-octadecenoyl)-sn-glycero-3-phosphocholine + CoA. It catalyses the reaction (9Z,12Z,15Z)-octadecatrienoyl-CoA + sn-glycerol 3-phosphocholine = (9Z,12Z,15Z-octadecatrienoyl)-sn-glycero-3-phosphocholine + CoA. The catalysed reaction is sn-glycerol 3-phosphocholine + (9Z)-octadecenoyl-CoA = (9Z-octadecenoyl)-sn-glycero-3-phosphocholine + CoA. Functionally, glycerophosphocholine acyltransferase (GPCAT) that utilizes acyl-CoA to acylate glycero-3-phosphocholine (GPC), forming lysophosphatidylcholine (LPC). Shows broad acyl specificities with a preference for 16:0-CoA, polyunsaturated acyl-CoA, and the hydroxylated ricinoleoyl-CoA. Also catalyzes the acylation of glycero-3-phosphoethanolamine (GPE) with acyl-CoA. In addition to acyl-CoA, GPCAT efficiently utilizes LPC and lysophosphatidylethanolamine (LPE) as acyl donors in the acylation of GPC. Contributes to the maintenance of phosphatidylcholine (PC) homeostasis and might also have specific functions in acyl editing of PC, such as transferring acyl groups modified at the sn-2 position of PC to the sn-1. This Ricinus communis (Castor bean) protein is Glycerophosphocholine acyltransferase 1.